The chain runs to 357 residues: 3-dehydroquinate synthase (357 aa).

NAD(+) is bound by residues 69–74 (DGEKNK), 103–107 (GVIGD), 127–128 (TT), Lys-140, and Lys-149. Zn(2+) is bound by residues Glu-182, His-245, and His-262.

It belongs to the sugar phosphate cyclases superfamily. Dehydroquinate synthase family. Requires Co(2+) as cofactor. Zn(2+) is required as a cofactor. It depends on NAD(+) as a cofactor.

It localises to the cytoplasm. The enzyme catalyses 7-phospho-2-dehydro-3-deoxy-D-arabino-heptonate = 3-dehydroquinate + phosphate. It functions in the pathway metabolic intermediate biosynthesis; chorismate biosynthesis; chorismate from D-erythrose 4-phosphate and phosphoenolpyruvate: step 2/7. Functionally, catalyzes the conversion of 3-deoxy-D-arabino-heptulosonate 7-phosphate (DAHP) to dehydroquinate (DHQ). The chain is 3-dehydroquinate synthase from Shewanella denitrificans (strain OS217 / ATCC BAA-1090 / DSM 15013).